A 365-amino-acid chain; its full sequence is Aminomethyltransferase (365 aa).

Belongs to the GcvT family. In terms of assembly, the glycine cleavage system is composed of four proteins: P, T, L and H.

It carries out the reaction N(6)-[(R)-S(8)-aminomethyldihydrolipoyl]-L-lysyl-[protein] + (6S)-5,6,7,8-tetrahydrofolate = N(6)-[(R)-dihydrolipoyl]-L-lysyl-[protein] + (6R)-5,10-methylene-5,6,7,8-tetrahydrofolate + NH4(+). Functionally, the glycine cleavage system catalyzes the degradation of glycine. The protein is Aminomethyltransferase of Desulfitobacterium hafniense (strain DSM 10664 / DCB-2).